The chain runs to 597 residues: Alpha-1,2-mannosyltransferase MNN2 (597 aa).

At 1 to 12 (MLLTKRFSKLFK) the chain is on the cytoplasmic side. The chain crosses the membrane as a helical; Signal-anchor for type II membrane protein span at residues 13–28 (LTFIVLILCGLFVITN). Residues 29–597 (KYMDENTSVK…STHDKAIAGK (569 aa)) lie on the Extracellular side of the membrane. N-linked (GlcNAc...) asparagine glycosylation is found at Asn-34, Asn-363, and Asn-473.

The protein belongs to the MNN1/MNT family. Interacts with SVP26.

Its subcellular location is the golgi apparatus membrane. The protein operates within protein modification; protein glycosylation. Functionally, alpha-1,2-mannosyltransferase, responsible for addition of the first alpha-1,2-linked mannose to form the branches on the mannan backbone of oligosaccharides. This chain is Alpha-1,2-mannosyltransferase MNN2 (MNN2), found in Saccharomyces cerevisiae (strain ATCC 204508 / S288c) (Baker's yeast).